The chain runs to 474 residues: Cell division protein FtsP (474 aa).

The tat-type signal signal peptide spans 1 to 27; it reads MSLSRRQFIQAAGLALGAGSLPLRAQA. In terms of domain architecture, Plastocyanin-like spans 229–288; it reads WVRLRLLNASNARRYTLQLSDGRPLYVVASDQGFLPAPVAVQQLSLAPGERREVVIDMSQ.

The protein belongs to the FtsP family. Predicted to be exported by the Tat system. The position of the signal peptide cleavage has not been experimentally proven.

Its subcellular location is the periplasm. Its function is as follows. Cell division protein that is required for growth during stress conditions. May be involved in protecting or stabilizing the divisomal assembly under conditions of stress. The sequence is that of Cell division protein FtsP from Yersinia pestis.